The chain runs to 267 residues: Diphthine synthase (267 aa).

Residues Leu9, Asp87, Ile90, 115 to 116, Leu166, Leu205, and His230 contribute to the S-adenosyl-L-methionine site; that span reads SI.

This sequence belongs to the diphthine synthase family. In terms of assembly, homodimer.

The enzyme catalyses 2-[(3S)-amino-3-carboxypropyl]-L-histidyl-[translation elongation factor 2] + 3 S-adenosyl-L-methionine = diphthine-[translation elongation factor 2] + 3 S-adenosyl-L-homocysteine + 3 H(+). It participates in protein modification; peptidyl-diphthamide biosynthesis. In terms of biological role, S-adenosyl-L-methionine-dependent methyltransferase that catalyzes the trimethylation of the amino group of the modified target histidine residue in translation elongation factor 2 (EF-2), to form an intermediate called diphthine. The three successive methylation reactions represent the second step of diphthamide biosynthesis. This Staphylothermus marinus (strain ATCC 43588 / DSM 3639 / JCM 9404 / F1) protein is Diphthine synthase.